Here is a 118-residue protein sequence, read N- to C-terminus: Acidic phospholipase A2 CM-I (118 aa).

7 disulfides stabilise this stretch: Cys-11–Cys-70, Cys-26–Cys-117, Cys-28–Cys-44, Cys-43–Cys-98, Cys-50–Cys-91, Cys-59–Cys-84, and Cys-77–Cys-89. Residues Tyr-27, Gly-29, and Gly-31 each coordinate Ca(2+). The active site involves His-47. Asp-48 serves as a coordination point for Ca(2+). Asp-92 is a catalytic residue.

It belongs to the phospholipase A2 family. Group I subfamily. D49 sub-subfamily. Requires Ca(2+) as cofactor. As to expression, expressed by the venom gland.

The protein localises to the secreted. The catalysed reaction is a 1,2-diacyl-sn-glycero-3-phosphocholine + H2O = a 1-acyl-sn-glycero-3-phosphocholine + a fatty acid + H(+). Functionally, snake venom phospholipase A2 (PLA2) that causes myonecrosis when injected intramuscularly, shows indirect hemolytic activity, abolishes twitches evoked by indirect stimulation earlier than those by direct stimulation (in the mouse phrenic nerve-diaphragm preparation) but does not produce complete neuromuscular block (up to 30 ug/ml) (in the chick biventer cervicis nerve-muscle preparation). PLA2 catalyzes the calcium-dependent hydrolysis of the 2-acyl groups in 3-sn-phosphoglycerides. This is Acidic phospholipase A2 CM-I from Naja mossambica (Mozambique spitting cobra).